The primary structure comprises 390 residues: Transforming growth factor beta-1 proprotein (390 aa).

A signal peptide spans 1 to 29; sequence MPPSGLRLLPLLLPLLWLLVLTPGRPAAG. The segment at 30-74 is straightjacket domain; sequence LSTCKTIDMELVKRKRIEAIRGQILSKLRLASPPSQGEVPPGPLP. The arm domain stretch occupies residues 75–271; sequence EAVLALYNST…ATPLERAQQL (197 aa). N-linked (GlcNAc...) asparagine glycosylation is found at Asn-82, Asn-136, and Asn-176. The bowtie tail stretch occupies residues 226 to 252; sequence DSKDNTLRVGINGFSSSRRGDLATIDG. The Cell attachment site motif lies at 244–246; the sequence is RGD. Cystine bridges form between Cys-285–Cys-294, Cys-293–Cys-356, Cys-322–Cys-387, and Cys-326–Cys-389.

It belongs to the TGF-beta family. As to quaternary structure, homodimer; disulfide-linked. Interacts with the serine proteases, HTRA1 and HTRA3: the interaction with either inhibits TGFB1-mediated signaling and the HTRA protease activity is required for this inhibition. May interact with THSD4; this interaction may lead to sequestration by FBN1 microfibril assembly and attenuation of TGFB signaling. Interacts with CD109, DPT and ASPN. Interacts with EFEMP2. Interacts with TSKU; the interaction contributes to regulation of the hair cycle. Interacts with TGFBR3. In terms of assembly, homodimer; disulfide-linked. Interacts with transforming growth factor beta-1 (TGF-beta-1) chain; interaction is non-covalent and maintains TGF-beta-1 in a latent state; each latency-associated peptide (LAP) monomer interacts with TGF-beta-1 in the other monomer. Interacts with LTBP1; leading to regulation of TGF-beta-1 activation. Interacts with LRRC32/GARP; leading to regulation of TGF-beta-1 activation on the surface of activated regulatory T-cells (Tregs). Interacts with LRRC33/NRROS; leading to regulation of TGF-beta-1 activation in macrophages and microglia. Interacts (via cell attachment site) with integrins ITGAV and ITGB6 (ITGAV:ITGB6), leading to release of the active TGF-beta-1. Latency-associated peptide: Interacts with NREP; the interaction results in a decrease in TGFB1 autoinduction. Interacts with HSP90AB1; inhibits latent TGFB1 activation. Homodimer; disulfide-linked. Interacts with TGF-beta receptors (TGFBR1 and TGFBR2), leading to signal transduction. Transforming growth factor beta-1 proprotein: The precursor proprotein is cleaved in the Golgi apparatus by FURIN to form Transforming growth factor beta-1 (TGF-beta-1) and Latency-associated peptide (LAP) chains, which remain non-covalently linked, rendering TGF-beta-1 inactive. In terms of processing, N-glycosylated. Deglycosylation leads to activation of Transforming growth factor beta-1 (TGF-beta-1); mechanisms triggering deglycosylation-driven activation of TGF-beta-1 are however unclear.

The protein resides in the secreted. The protein localises to the extracellular space. Its subcellular location is the extracellular matrix. Transforming growth factor beta-1 proprotein: Precursor of the Latency-associated peptide (LAP) and Transforming growth factor beta-1 (TGF-beta-1) chains, which constitute the regulatory and active subunit of TGF-beta-1, respectively. In terms of biological role, required to maintain the Transforming growth factor beta-1 (TGF-beta-1) chain in a latent state during storage in extracellular matrix. Associates non-covalently with TGF-beta-1 and regulates its activation via interaction with 'milieu molecules', such as LTBP1, LRRC32/GARP and LRRC33/NRROS, that control activation of TGF-beta-1. Interaction with LRRC33/NRROS regulates activation of TGF-beta-1 in macrophages and microglia. Interaction with LRRC32/GARP controls activation of TGF-beta-1 on the surface of activated regulatory T-cells (Tregs). Interaction with integrins (ITGAV:ITGB6 or ITGAV:ITGB8) results in distortion of the Latency-associated peptide chain and subsequent release of the active TGF-beta-1. Functionally, multifunctional protein that regulates the growth and differentiation of various cell types and is involved in various processes, such as normal development, immune function, microglia function and responses to neurodegeneration. Activation into mature form follows different steps: following cleavage of the proprotein in the Golgi apparatus, Latency-associated peptide (LAP) and Transforming growth factor beta-1 (TGF-beta-1) chains remain non-covalently linked rendering TGF-beta-1 inactive during storage in extracellular matrix. At the same time, LAP chain interacts with 'milieu molecules', such as LTBP1, LRRC32/GARP and LRRC33/NRROS that control activation of TGF-beta-1 and maintain it in a latent state during storage in extracellular milieus. TGF-beta-1 is released from LAP by integrins (ITGAV:ITGB6 or ITGAV:ITGB8): integrin-binding to LAP stabilizes an alternative conformation of the LAP bowtie tail and results in distortion of the LAP chain and subsequent release of the active TGF-beta-1. Once activated following release of LAP, TGF-beta-1 acts by binding to TGF-beta receptors (TGFBR1 and TGFBR2), which transduce signal. While expressed by many cells types, TGF-beta-1 only has a very localized range of action within cell environment thanks to fine regulation of its activation by Latency-associated peptide chain (LAP) and 'milieu molecules'. Plays an important role in bone remodeling: acts as a potent stimulator of osteoblastic bone formation, causing chemotaxis, proliferation and differentiation in committed osteoblasts. Can promote either T-helper 17 cells (Th17) or regulatory T-cells (Treg) lineage differentiation in a concentration-dependent manner. At high concentrations, leads to FOXP3-mediated suppression of RORC and down-regulation of IL-17 expression, favoring Treg cell development. At low concentrations in concert with IL-6 and IL-21, leads to expression of the IL-17 and IL-23 receptors, favoring differentiation to Th17 cells. Stimulates sustained production of collagen through the activation of CREB3L1 by regulated intramembrane proteolysis (RIP). Mediates SMAD2/3 activation by inducing its phosphorylation and subsequent translocation to the nucleus. Positively regulates odontoblastic differentiation in dental papilla cells, via promotion of IPO7-mediated translocation of phosphorylated SMAD2 to the nucleus and subsequent transcription of target genes. Can induce epithelial-to-mesenchymal transition (EMT) and cell migration in various cell types. This chain is Transforming growth factor beta-1 proprotein (TGFB1), found in Equus caballus (Horse).